A 466-amino-acid polypeptide reads, in one-letter code: Soluble pyridine nucleotide transhydrogenase (466 aa).

Glutamate 36 to cysteine 45 serves as a coordination point for FAD.

This sequence belongs to the class-I pyridine nucleotide-disulfide oxidoreductase family. Requires FAD as cofactor.

The protein resides in the cytoplasm. The catalysed reaction is NAD(+) + NADPH = NADH + NADP(+). Its function is as follows. Conversion of NADPH, generated by peripheral catabolic pathways, to NADH, which can enter the respiratory chain for energy generation. This Escherichia fergusonii (strain ATCC 35469 / DSM 13698 / CCUG 18766 / IAM 14443 / JCM 21226 / LMG 7866 / NBRC 102419 / NCTC 12128 / CDC 0568-73) protein is Soluble pyridine nucleotide transhydrogenase.